The primary structure comprises 311 residues: Glutaminase (311 aa).

Residues serine 66, asparagine 116, glutamate 162, asparagine 169, tyrosine 193, tyrosine 245, and valine 263 each contribute to the substrate site.

Belongs to the glutaminase family. As to quaternary structure, homotetramer.

It carries out the reaction L-glutamine + H2O = L-glutamate + NH4(+). The protein is Glutaminase of Rhodopseudomonas palustris (strain TIE-1).